The sequence spans 541 residues: Phenazine N-monooxygenase PhzNO1 (541 aa).

Residues Asp-39, 47–50 (TWYW), 59–60 (DT), Tyr-65, and Ile-112 contribute to the FAD site. 57 to 59 (RAD) is an NADP(+) binding site. NADP(+) contacts are provided by residues 186–192 (TGSTGVQ), 209–210 (RS), and Trp-492.

The protein belongs to the FAD-binding monooxygenase family. The cofactor is FAD.

It catalyses the reaction 1,6-dihydroxyphenazine + NADPH + O2 = 1,6-dihydroxyphenazine N(5)-oxide + NADP(+) + H2O. The enzyme catalyses 1,6-dihydroxyphenazine N(5)-oxide + NADPH + O2 = 1,6-dihydroxyphenazine N(5),N(10)-dioxide + NADP(+) + H2O. The catalysed reaction is 1-hydroxy-6-methoxyphenazine + NADPH + O2 = 1-hydroxy-6-methoxyphenazine N(10)-oxide + NADP(+) + H2O. It carries out the reaction quinolin-8-ol + NADPH + O2 = 8-hydroxyquinoline N-oxide + NADP(+) + H2O. Involved in the biosynthesis of phenazine natural products including myxin, an N(5),N(10)-dioxide phenazine antiobiotic, which has antimicrobial activity. Catalyzes the aromatic N-oxidations of phenazines, such as 1,6-dihydroxyphenazine (DHP), 1,6-dihydroxyphenazine N(5)-oxide (DHPO) and 1-hydroxy-6-methoxyphenazine to produce DHPO, iodinin (1,6-dihydroxyphenazine N(5),N(10)-dioxide) and 1-hydroxy-6-methoxyphenazine N(10)-oxide, respectively. Also catalyzes the N-oxidation of 8-hydroxyquinoline, but not 6-hydroxyquinoline (6-HQ), quinoline, quinoxaline, quinine and 2-phenylpyridine. The polypeptide is Phenazine N-monooxygenase PhzNO1 (Lysobacter antibioticus).